Consider the following 416-residue polypeptide: CinA-like protein (416 aa).

The protein belongs to the CinA family.

In Amoebophilus asiaticus (strain 5a2), this protein is CinA-like protein.